Reading from the N-terminus, the 549-residue chain is MPLSPAGVLSSTSTASNRSRNRPRYRTKALSSEVDESLFGGIKPLNQSDSPIVLLRDKHAIRKTLTALGLDHKPETIQLITRDMVRELIIPTKDPSGESLIMSPEEFERIRWASHVPTREELEAKEQACKKEKEAIVDAVTTRKKIMKQKEMVSRNNQKLSDLEEVAKERAQNLLQRASQLRMEQEEELKDMKKIILNAKCHAIRDAQILEKQLIQKELDAEEKRLDQMMEVERQKSIQRQEELDKKRREERIRGRRHIVEQMEKNQEERSLLAEQREQEKEQMLEYMEQLQEEDLRDLERRHQQKLKMQAEIKRINDENQKQKAELLAQEKLADQMVMEFTKKKMAREAEFEAEQERIRREKEKEISRLRALQEKVQDYQAEQDALRAKRNQEVADREWRRKEKENAQKKMETEAQLRKSRLEQVAFKEHSLAVQVQRDRDEFERILRAQREQIEKEQQEEEKKAMERLQHANELRRQVRENQQKQVQDRIAIFEEGQRLKEEAQKRRERIEGIKKKKIEELRATGLPEKYCIEAERKANIPTNTSVN.

Residues 1-29 are disordered; sequence MPLSPAGVLSSTSTASNRSRNRPRYRTKA. Coiled coils occupy residues 119-232, 259-393, and 434-522; these read REEL…MMEV, IVEQ…KRNQ, and AVQV…KIEE. Residues 388 to 416 are disordered; the sequence is RAKRNQEVADREWRRKEKENAQKKMETEA.

Belongs to the CFAP45 family. Microtubule inner protein component of sperm flagellar doublet microtubules. Interacts with AK8; dimerization with AK8 may create a cavity at the interface of the dimer that can accommodate AMP. Interacts with CFAP52. Interacts with ENKUR. Directly interacts with DNALI1. Interacts with DNAH11. Interacts with DNAI1. Expressed in respiratory cells (at protein level).

It is found in the cytoplasm. Its subcellular location is the cytoskeleton. It localises to the cilium axoneme. The protein localises to the flagellum axoneme. The protein resides in the cell projection. It is found in the cilium. Its subcellular location is the flagellum. Microtubule inner protein (MIP) part of the dynein-decorated doublet microtubules (DMTs) in cilia axoneme, which is required for motile cilia beating. It is an AMP-binding protein that may facilitate dynein ATPase-dependent ciliary and flagellar beating via adenine nucleotide homeostasis. May function as a donor of AMP to AK8 and hence promote ADP production. The polypeptide is Cilia- and flagella-associated protein 45 (CFAP45) (Sus scrofa (Pig)).